Here is a 339-residue protein sequence, read N- to C-terminus: Putative phosphate acyltransferase (339 aa).

It belongs to the PlsX family. Homodimer. Probably interacts with PlsY.

It localises to the cytoplasm. The enzyme catalyses a fatty acyl-[ACP] + phosphate = an acyl phosphate + holo-[ACP]. It participates in lipid metabolism; phospholipid metabolism. Catalyzes the reversible formation of acyl-phosphate (acyl-PO(4)) from acyl-[acyl-carrier-protein] (acyl-ACP). This enzyme utilizes acyl-ACP as fatty acyl donor, but not acyl-CoA. This Clostridium perfringens (strain 13 / Type A) protein is Putative phosphate acyltransferase.